Consider the following 330-residue polypeptide: Ketol-acid reductoisomerase (NADP(+)) (330 aa).

The region spanning 1 to 181 (MKVFYDSDFK…GLSRAGVIQT (181 aa)) is the KARI N-terminal Rossmann domain. NADP(+) is bound by residues 24-27 (YGSQ), arginine 47, serine 52, and 82-85 (DELQ). The active site involves histidine 107. Glycine 133 is a binding site for NADP(+). In terms of domain architecture, KARI C-terminal knotted spans 182–327 (TFKEETETDL…AKLRKMCGLE (146 aa)). Residues aspartate 190, glutamate 194, glutamate 226, and glutamate 230 each contribute to the Mg(2+) site. A substrate-binding site is contributed by serine 251.

This sequence belongs to the ketol-acid reductoisomerase family. Mg(2+) serves as cofactor.

The catalysed reaction is (2R)-2,3-dihydroxy-3-methylbutanoate + NADP(+) = (2S)-2-acetolactate + NADPH + H(+). It catalyses the reaction (2R,3R)-2,3-dihydroxy-3-methylpentanoate + NADP(+) = (S)-2-ethyl-2-hydroxy-3-oxobutanoate + NADPH + H(+). It participates in amino-acid biosynthesis; L-isoleucine biosynthesis; L-isoleucine from 2-oxobutanoate: step 2/4. The protein operates within amino-acid biosynthesis; L-valine biosynthesis; L-valine from pyruvate: step 2/4. In terms of biological role, involved in the biosynthesis of branched-chain amino acids (BCAA). Catalyzes an alkyl-migration followed by a ketol-acid reduction of (S)-2-acetolactate (S2AL) to yield (R)-2,3-dihydroxy-isovalerate. In the isomerase reaction, S2AL is rearranged via a Mg-dependent methyl migration to produce 3-hydroxy-3-methyl-2-ketobutyrate (HMKB). In the reductase reaction, this 2-ketoacid undergoes a metal-dependent reduction by NADPH to yield (R)-2,3-dihydroxy-isovalerate. The chain is Ketol-acid reductoisomerase (NADP(+)) from Methanococcus maripaludis (strain C7 / ATCC BAA-1331).